A 111-amino-acid polypeptide reads, in one-letter code: Translation initiation factor 1A (111 aa).

Residues 1–13 (MKKSNNKNNHKNN) are compositionally biased toward basic residues. The segment at 1-30 (MKKSNNKNNHKNNHNNNQGGENIRVRSPRR) is disordered. In terms of domain architecture, S1-like spans 23–96 (IRVRSPRRGE…EKADVIWRYT (74 aa)).

This sequence belongs to the eIF-1A family.

In terms of biological role, seems to be required for maximal rate of protein biosynthesis. Enhances ribosome dissociation into subunits and stabilizes the binding of the initiator Met-tRNA(I) to 40 S ribosomal subunits. This is Translation initiation factor 1A from Methanosphaera stadtmanae (strain ATCC 43021 / DSM 3091 / JCM 11832 / MCB-3).